Consider the following 96-residue polypeptide: MAEISKDQVKHVAHLARLELDDEAVEKMSDELSAIIDFAEQLNELDTDSVEPTTHVLNLKNVMRKDEPKKWISQEDALRNAPDHKDGQIRVPSILE.

It belongs to the GatC family. As to quaternary structure, heterotrimer of A, B and C subunits.

It catalyses the reaction L-glutamyl-tRNA(Gln) + L-glutamine + ATP + H2O = L-glutaminyl-tRNA(Gln) + L-glutamate + ADP + phosphate + H(+). It carries out the reaction L-aspartyl-tRNA(Asn) + L-glutamine + ATP + H2O = L-asparaginyl-tRNA(Asn) + L-glutamate + ADP + phosphate + 2 H(+). In terms of biological role, allows the formation of correctly charged Asn-tRNA(Asn) or Gln-tRNA(Gln) through the transamidation of misacylated Asp-tRNA(Asn) or Glu-tRNA(Gln) in organisms which lack either or both of asparaginyl-tRNA or glutaminyl-tRNA synthetases. The reaction takes place in the presence of glutamine and ATP through an activated phospho-Asp-tRNA(Asn) or phospho-Glu-tRNA(Gln). This Oceanobacillus iheyensis (strain DSM 14371 / CIP 107618 / JCM 11309 / KCTC 3954 / HTE831) protein is Aspartyl/glutamyl-tRNA(Asn/Gln) amidotransferase subunit C.